Consider the following 177-residue polypeptide: Peptide methionine sulfoxide reductase MsrA (177 aa).

The active site involves cysteine 15.

Belongs to the MsrA Met sulfoxide reductase family.

The catalysed reaction is L-methionyl-[protein] + [thioredoxin]-disulfide + H2O = L-methionyl-(S)-S-oxide-[protein] + [thioredoxin]-dithiol. It catalyses the reaction [thioredoxin]-disulfide + L-methionine + H2O = L-methionine (S)-S-oxide + [thioredoxin]-dithiol. Its function is as follows. Has an important function as a repair enzyme for proteins that have been inactivated by oxidation. Catalyzes the reversible oxidation-reduction of methionine sulfoxide in proteins to methionine. The polypeptide is Peptide methionine sulfoxide reductase MsrA (Listeria welshimeri serovar 6b (strain ATCC 35897 / DSM 20650 / CCUG 15529 / CIP 8149 / NCTC 11857 / SLCC 5334 / V8)).